Consider the following 454-residue polypeptide: UDP-N-acetylmuramate--L-alanine ligase (454 aa).

109-115 (GTHGKTT) is an ATP binding site.

It belongs to the MurCDEF family.

The protein localises to the cytoplasm. It carries out the reaction UDP-N-acetyl-alpha-D-muramate + L-alanine + ATP = UDP-N-acetyl-alpha-D-muramoyl-L-alanine + ADP + phosphate + H(+). The protein operates within cell wall biogenesis; peptidoglycan biosynthesis. Its function is as follows. Cell wall formation. The chain is UDP-N-acetylmuramate--L-alanine ligase from Protochlamydia amoebophila (strain UWE25).